Here is a 604-residue protein sequence, read N- to C-terminus: Integrin alpha-IIb (604 aa).

An FG-GAP repeat occupies 1–61 (QVLDSPFPTG…ASVQLLVQDS (61 aa)). Residues 1–558 (QVLDSPFPTG…TQLLRALEER (558 aa)) lie on the Extracellular side of the membrane. Ca(2+)-binding residues include aspartate 22, aspartate 24, asparagine 26, tyrosine 28, and aspartate 30. 2 cysteine pairs are disulfide-bonded: cysteine 69/cysteine 80 and cysteine 86/cysteine 141. The N-linked (GlcNAc...) asparagine glycan is linked to asparagine 166. Cystine bridges form between cysteine 198/cysteine 204, cysteine 270/cysteine 283, cysteine 422/cysteine 486, and cysteine 476/cysteine 481. Asparagine 276 carries N-linked (GlcNAc...) asparagine glycosylation. Asparagine 527 carries an N-linked (GlcNAc...) asparagine glycan. Residues 559 to 584 (AIPIWWVLVGVLGGLLLLTILVLAMW) traverse the membrane as a helical segment. At 585–604 (KVGFFKRNRPPLEEDDEEGE) the chain is on the cytoplasmic side. The short motif at 587-591 (GFFKR) is the GFFKR motif element.

This sequence belongs to the integrin alpha chain family. As to quaternary structure, heterodimer of an alpha and a beta subunit. The alpha subunit is composed of a heavy and a light chain linked by a disulfide bond. Alpha-IIb associates with beta-3. Directly interacts with RNF181. Interacts (via C-terminus cytoplasmic tail region) with CIB1; the interaction is direct and calcium-dependent. Interacts (via C-terminus cytoplasmic tail region) with CIB2, CIB3 and CIB4; the interactions are stabilized/increased in a calcium and magnesium-dependent manner. ITGA2B:ITGB3 interacts with PPIA/CYPA; the interaction is ROS and PPIase activity-dependent and is increased in the presence of thrombin. ITGA2B:ITGB3 interacts with SELP (via C-type lectin domain); the interaction mediates cell-cell interaction and adhesion.

Its subcellular location is the membrane. Its function is as follows. Integrin alpha-IIb/beta-3 is a receptor for fibronectin, fibrinogen, plasminogen, prothrombin, thrombospondin and vitronectin. It recognizes the sequence R-G-D in a wide array of ligands. It recognizes the sequence H-H-L-G-G-G-A-K-Q-A-G-D-V in fibrinogen gamma chain. Following activation integrin alpha-IIb/beta-3 brings about platelet/platelet interaction through binding of soluble fibrinogen. This step leads to rapid platelet aggregation which physically plugs ruptured endothelial cell surface. This Papio cynocephalus (Yellow baboon) protein is Integrin alpha-IIb (ITGA2B).